The primary structure comprises 268 residues: LOB domain-containing protein 13 (268 aa).

Residues 51-152 form the LOB domain; it reads TPCAACKLLR…SELTTVRTEI (102 aa). The interval 191–268 is disordered; the sequence is LLPPPPPPPP…SSDNNVHYFD (78 aa). Composition is skewed to pro residues over residues 192–205 and 212–222; these read LPPP…PRPP and PAPPPTPPVSL. Over residues 223-243 the composition is skewed to low complexity; it reads PSPSMVVSSSSSSNSSATNSM. Polar residues predominate over residues 250–268; the sequence is STAGYSNSLSSDNNVHYFD.

It belongs to the LOB domain-containing protein family. As to expression, expressed in shoots and roots and at low levels in flowers, but not in leaves or inflorescence stems.

In Arabidopsis thaliana (Mouse-ear cress), this protein is LOB domain-containing protein 13 (LBD13).